The primary structure comprises 364 residues: NADH-quinone oxidoreductase subunit H (364 aa).

Helical transmembrane passes span 21-41 (AGQILAVMIWILLSLAFLLLA), 88-108 (VFLLAPLISFTLAFAAWAVIP), 120-140 (VGILYLFAISSLGVYGIIMGG), 159-179 (MVSYEVSIGFIIITVILLAGS), 208-228 (LPLLLVMVPMAVIFFISGLAE), 267-287 (IVLICAMTTILFFGGWSAPFP), 301-321 (FYYFMWFFLKVIFFFFLVSMA), and 340-360 (VFLPFSLVCVALIAAWRVFGP).

Belongs to the complex I subunit 1 family. In terms of assembly, NDH-1 is composed of 14 different subunits. Subunits NuoA, H, J, K, L, M, N constitute the membrane sector of the complex.

The protein localises to the cell inner membrane. It catalyses the reaction a quinone + NADH + 5 H(+)(in) = a quinol + NAD(+) + 4 H(+)(out). Its function is as follows. NDH-1 shuttles electrons from NADH, via FMN and iron-sulfur (Fe-S) centers, to quinones in the respiratory chain. The immediate electron acceptor for the enzyme in this species is believed to be ubiquinone. Couples the redox reaction to proton translocation (for every two electrons transferred, four hydrogen ions are translocated across the cytoplasmic membrane), and thus conserves the redox energy in a proton gradient. This subunit may bind ubiquinone. In Phenylobacterium zucineum (strain HLK1), this protein is NADH-quinone oxidoreductase subunit H.